A 153-amino-acid polypeptide reads, in one-letter code: MKHWKRRSSAVFAIVLQVLVLLLPDPAVAMTMEQFLTSLDMIRSGCAPKFKLKTEDLDRLRVGDFNFPPSQDLMCYTKCVSLMAGTVNKKGEFNAPKALAQLPHLVPPEMMEMSRKSVEACRDTHKQFKESCERVYQTAKCFSENADGQFMWP.

The first 29 residues, 1–29 (MKHWKRRSSAVFAIVLQVLVLLLPDPAVA), serve as a signal peptide directing secretion. Intrachain disulfides connect Cys46-Cys79, Cys75-Cys132, and Cys121-Cys141. 1-propanol is bound by residues Ser81 and Thr86. Butan-1-ol-binding residues include Ser81 and Thr86. Ethanol is bound by residues Ser81 and Thr86.

The protein belongs to the PBP/GOBP family. In terms of tissue distribution, specifically expressed in chemosensory system in both males and females. Expressed in a subset of trichoid chemosensory sensilla located on the ventral-lateral surface of the third antennal segment. Secreted from non-neuronal support cells into the sensillum lymph that bathes the olfactory neurons within these sensilla.

It localises to the secreted. Functionally, odorant-binding protein required for olfactory behavior and for activity of pheromone-sensitive neurons. Binds to alcohols and mediates avoidance behavior to high concentrations of alcohols, the alcohol-binding possibly resulting in activation of receptors on T2B neurons, the activation of these receptors inhibiting these neurons. Acts in concert with Snmp and lush to capture cVA molecules on the surface of Or67d expressing olfactory dendrites and facilitate their transfer to the odorant-receptor Orco complex. Required for cVA response, probably by binding to VA. May act by serving as an adapter that bridges the presence of gaseous pheromone molecules, cVA, to activation of specific neuronal receptors expressed on T1 olfactory neurons, possibly via a specific conformational change induced by cVA that in turn activates T1 receptors. T1 neurons are excited by the pheromone VA, while T2 neurons are inhibited by alcohols. Also binds to phthalates. This is General odorant-binding protein lush (lush) from Drosophila melanogaster (Fruit fly).